The primary structure comprises 287 residues: Lycopene elongase/hydratase (287 aa).

A run of 7 helical transmembrane segments spans residues 15 to 35, 37 to 57, 87 to 107, 137 to 157, 166 to 186, 218 to 238, and 265 to 285; these read ISWI…AGEI, WLFW…MYGI, TLLW…FIFG, FIDA…GATI, MWIA…LGAV, LLAA…GIAI, and VFLW…IAIH.

It belongs to the UbiA prenyltransferase family.

Its subcellular location is the cell membrane. The enzyme catalyses all-trans-lycopene + dimethylallyl diphosphate + A + H2O = nonaflavuxanthin + AH2 + diphosphate. It carries out the reaction nonaflavuxanthin + dimethylallyl diphosphate + A + H2O = flavuxanthin + AH2 + diphosphate. The protein operates within carotenoid biosynthesis. In terms of biological role, catalyzes the elongation of the C(40) carotenoid all-trans-lycopene to the acyclic C(50) carotenoid flavuxanthin during decaprenoxanthin biosynthesis. Acts as a bifunctional enzyme that catalyzes the elongation of lycopene by attaching a C(5) isoprene unit at C-2, as well as the hydroxylation of the new isoprene unit. The enzyme acts at both ends of the substrate, forming the C(50) carotenoid flavuxanthin via the C(45) intermediate nonaflavuxanthin. This is Lycopene elongase/hydratase from Corynebacterium glutamicum (strain ATCC 13032 / DSM 20300 / JCM 1318 / BCRC 11384 / CCUG 27702 / LMG 3730 / NBRC 12168 / NCIMB 10025 / NRRL B-2784 / 534).